The sequence spans 379 residues: DNA-directed RNA polymerase subunit Rpo1C (379 aa).

The protein belongs to the RNA polymerase beta' chain family. Part of the RNA polymerase complex.

The protein resides in the cytoplasm. It carries out the reaction RNA(n) + a ribonucleoside 5'-triphosphate = RNA(n+1) + diphosphate. Its function is as follows. DNA-dependent RNA polymerase (RNAP) catalyzes the transcription of DNA into RNA using the four ribonucleoside triphosphates as substrates. Forms part of the jaw domain. This is DNA-directed RNA polymerase subunit Rpo1C from Pyrobaculum aerophilum (strain ATCC 51768 / DSM 7523 / JCM 9630 / CIP 104966 / NBRC 100827 / IM2).